We begin with the raw amino-acid sequence, 298 residues long: 4-diphosphocytidyl-2-C-methyl-D-erythritol kinase (298 aa).

Lys-11 is a catalytic residue. Residue 94–104 (PMGGGLGGGSS) coordinates ATP. Residue Asp-136 is part of the active site.

Belongs to the GHMP kinase family. IspE subfamily.

It carries out the reaction 4-CDP-2-C-methyl-D-erythritol + ATP = 4-CDP-2-C-methyl-D-erythritol 2-phosphate + ADP + H(+). The protein operates within isoprenoid biosynthesis; isopentenyl diphosphate biosynthesis via DXP pathway; isopentenyl diphosphate from 1-deoxy-D-xylulose 5-phosphate: step 3/6. In terms of biological role, catalyzes the phosphorylation of the position 2 hydroxy group of 4-diphosphocytidyl-2C-methyl-D-erythritol. The polypeptide is 4-diphosphocytidyl-2-C-methyl-D-erythritol kinase (Chromohalobacter salexigens (strain ATCC BAA-138 / DSM 3043 / CIP 106854 / NCIMB 13768 / 1H11)).